The following is a 702-amino-acid chain: Elongation factor G 2 (702 aa).

A tr-type G domain is found at 8-291 (ELYRNIGIVA…AVIDYLPAPS (284 aa)). Residues 17–24 (AHVDAGKT), 89–93 (DTPGH), and 143–146 (NKMD) each bind GTP. The interval 293–314 (IPAIRGTDPDDEEKHDERHADD) is disordered.

The protein belongs to the TRAFAC class translation factor GTPase superfamily. Classic translation factor GTPase family. EF-G/EF-2 subfamily.

Its subcellular location is the cytoplasm. Its function is as follows. Catalyzes the GTP-dependent ribosomal translocation step during translation elongation. During this step, the ribosome changes from the pre-translocational (PRE) to the post-translocational (POST) state as the newly formed A-site-bound peptidyl-tRNA and P-site-bound deacylated tRNA move to the P and E sites, respectively. Catalyzes the coordinated movement of the two tRNA molecules, the mRNA and conformational changes in the ribosome. The sequence is that of Elongation factor G 2 (fusB) from Pseudomonas aeruginosa (strain ATCC 15692 / DSM 22644 / CIP 104116 / JCM 14847 / LMG 12228 / 1C / PRS 101 / PAO1).